Reading from the N-terminus, the 282-residue chain is Putative glycosyltransferase HI_0765 (282 aa).

The protein belongs to the glycosyltransferase 25 family.

The protein is Putative glycosyltransferase HI_0765 of Haemophilus influenzae (strain ATCC 51907 / DSM 11121 / KW20 / Rd).